Consider the following 74-residue polypeptide: Sec-independent protein translocase protein TatA (74 aa).

A helical transmembrane segment spans residues 1–21; sequence MGSFSIWHWLIVLLIVVLVFG.

The protein belongs to the TatA/E family. In terms of assembly, the Tat system comprises two distinct complexes: a TatABC complex, containing multiple copies of TatA, TatB and TatC subunits, and a separate TatA complex, containing only TatA subunits. Substrates initially bind to the TatABC complex, which probably triggers association of the separate TatA complex to form the active translocon.

The protein resides in the cell inner membrane. Its function is as follows. Part of the twin-arginine translocation (Tat) system that transports large folded proteins containing a characteristic twin-arginine motif in their signal peptide across membranes. TatA could form the protein-conducting channel of the Tat system. This Nitrosospira multiformis (strain ATCC 25196 / NCIMB 11849 / C 71) protein is Sec-independent protein translocase protein TatA.